We begin with the raw amino-acid sequence, 729 residues long: Fatty acid oxidation complex subunit alpha (729 aa).

The tract at residues M1–K189 is enoyl-CoA hydratase/isomerase. D296 is a substrate binding site. The 3-hydroxyacyl-CoA dehydrogenase stretch occupies residues E311–A729. Residues M324, D343, V400–E402, K407, and S429 contribute to the NAD(+) site. The For 3-hydroxyacyl-CoA dehydrogenase activity role is filled by H450. N453 contacts NAD(+). 2 residues coordinate substrate: N500 and Y660.

The protein in the N-terminal section; belongs to the enoyl-CoA hydratase/isomerase family. It in the C-terminal section; belongs to the 3-hydroxyacyl-CoA dehydrogenase family. In terms of assembly, heterotetramer of two alpha chains (FadB) and two beta chains (FadA).

The enzyme catalyses a (3S)-3-hydroxyacyl-CoA + NAD(+) = a 3-oxoacyl-CoA + NADH + H(+). The catalysed reaction is a (3S)-3-hydroxyacyl-CoA = a (2E)-enoyl-CoA + H2O. It catalyses the reaction a 4-saturated-(3S)-3-hydroxyacyl-CoA = a (3E)-enoyl-CoA + H2O. It carries out the reaction (3S)-3-hydroxybutanoyl-CoA = (3R)-3-hydroxybutanoyl-CoA. The enzyme catalyses a (3Z)-enoyl-CoA = a 4-saturated (2E)-enoyl-CoA. The catalysed reaction is a (3E)-enoyl-CoA = a 4-saturated (2E)-enoyl-CoA. It functions in the pathway lipid metabolism; fatty acid beta-oxidation. Involved in the aerobic and anaerobic degradation of long-chain fatty acids via beta-oxidation cycle. Catalyzes the formation of 3-oxoacyl-CoA from enoyl-CoA via L-3-hydroxyacyl-CoA. It can also use D-3-hydroxyacyl-CoA and cis-3-enoyl-CoA as substrate. This is Fatty acid oxidation complex subunit alpha from Escherichia coli (strain SE11).